The primary structure comprises 180 residues: Large ribosomal subunit protein uL6 (180 aa).

Belongs to the universal ribosomal protein uL6 family. As to quaternary structure, part of the 50S ribosomal subunit.

Its function is as follows. This protein binds to the 23S rRNA, and is important in its secondary structure. It is located near the subunit interface in the base of the L7/L12 stalk, and near the tRNA binding site of the peptidyltransferase center. The protein is Large ribosomal subunit protein uL6 of Clostridium botulinum (strain Alaska E43 / Type E3).